We begin with the raw amino-acid sequence, 514 residues long: ATP synthase subunit alpha (514 aa).

170–177 (GDRQIGKT) provides a ligand contact to ATP.

This sequence belongs to the ATPase alpha/beta chains family. F-type ATPases have 2 components, CF(1) - the catalytic core - and CF(0) - the membrane proton channel. CF(1) has five subunits: alpha(3), beta(3), gamma(1), delta(1), epsilon(1). CF(0) has three main subunits: a(1), b(2) and c(9-12). The alpha and beta chains form an alternating ring which encloses part of the gamma chain. CF(1) is attached to CF(0) by a central stalk formed by the gamma and epsilon chains, while a peripheral stalk is formed by the delta and b chains.

It is found in the cell inner membrane. It catalyses the reaction ATP + H2O + 4 H(+)(in) = ADP + phosphate + 5 H(+)(out). In terms of biological role, produces ATP from ADP in the presence of a proton gradient across the membrane. The alpha chain is a regulatory subunit. The sequence is that of ATP synthase subunit alpha from Stutzerimonas stutzeri (strain A1501) (Pseudomonas stutzeri).